The chain runs to 105 residues: Small ribosomal subunit protein uS10 (105 aa).

This sequence belongs to the universal ribosomal protein uS10 family. As to quaternary structure, part of the 30S ribosomal subunit.

Involved in the binding of tRNA to the ribosomes. The chain is Small ribosomal subunit protein uS10 from Roseobacter denitrificans (strain ATCC 33942 / OCh 114) (Erythrobacter sp. (strain OCh 114)).